A 447-amino-acid polypeptide reads, in one-letter code: Putative short-chain fatty acid transporter (447 aa).

11 consecutive transmembrane segments (helical) span residues 17–37 (LPDP…CAWG), 49–69 (MWGN…LIVV), 98–118 (VVLV…FGLV), 136–156 (YALL…GFSG), 188–208 (TLFS…LPFI), 252–272 (FLAY…FYKN), 284–304 (IFLI…RAII), 321–341 (AGVQ…EFFI), 359–379 (FINF…PFVI), 402–422 (WMNM…GLGV), and 427–447 (GFCM…LYFL).

The protein resides in the cell inner membrane. Its function is as follows. May be responsible for the uptake of short-chain fatty acids. This is Putative short-chain fatty acid transporter (atoE) from Haemophilus influenzae (strain ATCC 51907 / DSM 11121 / KW20 / Rd).